We begin with the raw amino-acid sequence, 225 residues long: UPF0758 protein Bpet3149 (225 aa).

One can recognise an MPN domain in the interval 103–225; sequence AMSEPGSVKR…VVSMAELGLL (123 aa). 3 residues coordinate Zn(2+): H174, H176, and D187. The JAMM motif motif lies at 174–187; the sequence is HNHPSGSAQPSQAD.

Belongs to the UPF0758 family.

The protein is UPF0758 protein Bpet3149 of Bordetella petrii (strain ATCC BAA-461 / DSM 12804 / CCUG 43448).